The chain runs to 279 residues: DegV domain-containing protein spr1019 (279 aa).

In terms of domain architecture, DegV spans 4–277 (IKIVTDSSVT…ENAWAILIRY (274 aa)). Hexadecanoate contacts are provided by Thr62 and Ser94.

In terms of biological role, may bind long-chain fatty acids, such as palmitate, and may play a role in lipid transport or fatty acid metabolism. The protein is DegV domain-containing protein spr1019 of Streptococcus pneumoniae (strain ATCC BAA-255 / R6).